A 396-amino-acid chain; its full sequence is Phosphoglycerate kinase (396 aa).

Substrate is bound by residues 21–23 (DLN), Arg36, 59–62 (HFGR), Arg118, and Arg151. Residues Lys201, Glu323, and 353–356 (GGDT) each bind ATP.

It belongs to the phosphoglycerate kinase family. As to quaternary structure, monomer.

It localises to the cytoplasm. The catalysed reaction is (2R)-3-phosphoglycerate + ATP = (2R)-3-phospho-glyceroyl phosphate + ADP. Its pathway is carbohydrate degradation; glycolysis; pyruvate from D-glyceraldehyde 3-phosphate: step 2/5. This chain is Phosphoglycerate kinase, found in Rhodospirillum centenum (strain ATCC 51521 / SW).